We begin with the raw amino-acid sequence, 543 residues long: Peptide chain release factor 3 (543 aa).

One can recognise a tr-type G domain in the interval 21–289; sequence KKRRTFAIIS…ALSDWAPSPL (269 aa). GTP is bound by residues 30-37, 98-102, and 152-155; these read SHPDAGKT, DTPGH, and NKLD.

The protein belongs to the TRAFAC class translation factor GTPase superfamily. Classic translation factor GTPase family. PrfC subfamily.

It localises to the cytoplasm. Functionally, increases the formation of ribosomal termination complexes and stimulates activities of RF-1 and RF-2. It binds guanine nucleotides and has strong preference for UGA stop codons. It may interact directly with the ribosome. The stimulation of RF-1 and RF-2 is significantly reduced by GTP and GDP, but not by GMP. This chain is Peptide chain release factor 3, found in Thiobacillus denitrificans (strain ATCC 25259 / T1).